The primary structure comprises 833 residues: MSFYNHKEIEPKWQKYWADHHTFKTGTDASKPKFYALDMFPYPSGAGLHVGHPEGYTATDILSRFKRAQGYNVLHPMGWDAFGLPAEQYAMDTGNDPADFTAENIANFKRQINALGFSYDWDREINTTDPNYYKWTQWIFTKLYEKGLAYEAEVPVNWVEELGTAIANEEVLPDGTSERGGYPVVRKPMRQWMLKITAYAERLLNDLDELDWPESIKDMQRNWIGKSTGANVTFKVKGTDKEFTVFTTRPDTLFGATFTVLAPEHDLVDAITSPEQAEAVANYKHQASLKSDLARTDLAKEKTGVWTGAYAINPVNGREIPIWIADYVLASYGTGAVMAVPAHDERDWEFAKQFGLPIVEVLEGGNVEEAAYTEDGPHVNSDFLNGLNKEEAIAKIVAWLEEKGFGQEKITYRLRDWLFSRQRYWGEPIPIIHWEDGTSTAVPESELPLVLPVTKDIRPSGTGESPLANLTDWLEVTREDGVKGRRETNTMPQWAGSSWYYLRYIDPHNTEKLADEDLLKQWLPVDIYVGGAEHAVLHLLYARFWHKFLYDLGVVPTKEPFQKLFNQGMILGTSYRDHRGALVATDKVEKRDGSFFHVETGEELEQAPAKMSKSLKNVVNPDDVVEQYGADTLRVYEMFMGPLDASIAWSEEGLEGSRKFLDRVYRLITSKEIVAENNGGLDKVYNETVKSVTEQIELMKFNTAIAQLMVFVNAANKEDKLYVDYAKGFVQLIAPFAPHLAEELWQTLTATGESISYVAWPTWDESKLVEDEIEIVVQIKGKVRAKLMVAKDLSREELQEVALADEKVKAEIDGKEIVKVIAVPNKLVNIVVK.

The 'HIGH' region motif lies at 41-52 (PYPSGAGLHVGH). A 'KMSKS' region motif is present at residues 610–614 (KMSKS). Residue Lys-613 coordinates ATP.

It belongs to the class-I aminoacyl-tRNA synthetase family.

The protein localises to the cytoplasm. It catalyses the reaction tRNA(Leu) + L-leucine + ATP = L-leucyl-tRNA(Leu) + AMP + diphosphate. The chain is Leucine--tRNA ligase from Streptococcus thermophilus (strain CNRZ 1066).